We begin with the raw amino-acid sequence, 392 residues long: Formate-dependent phosphoribosylglycinamide formyltransferase (392 aa).

Residues 22–23 (EL) and Glu-82 each bind N(1)-(5-phospho-beta-D-ribosyl)glycinamide. Residues Arg-114, Lys-155, 160–165 (SSGKGQ), 195–198 (EGVV), and Glu-203 each bind ATP. Residues 119 to 308 (RLAAEELGLP…EFALHVRAFL (190 aa)) enclose the ATP-grasp domain. Mg(2+)-binding residues include Glu-267 and Glu-279. Residues Asp-286, Lys-355, and 362 to 363 (RR) each bind N(1)-(5-phospho-beta-D-ribosyl)glycinamide.

This sequence belongs to the PurK/PurT family. Homodimer.

The enzyme catalyses N(1)-(5-phospho-beta-D-ribosyl)glycinamide + formate + ATP = N(2)-formyl-N(1)-(5-phospho-beta-D-ribosyl)glycinamide + ADP + phosphate + H(+). The protein operates within purine metabolism; IMP biosynthesis via de novo pathway; N(2)-formyl-N(1)-(5-phospho-D-ribosyl)glycinamide from N(1)-(5-phospho-D-ribosyl)glycinamide (formate route): step 1/1. Involved in the de novo purine biosynthesis. Catalyzes the transfer of formate to 5-phospho-ribosyl-glycinamide (GAR), producing 5-phospho-ribosyl-N-formylglycinamide (FGAR). Formate is provided by PurU via hydrolysis of 10-formyl-tetrahydrofolate. In Salmonella choleraesuis (strain SC-B67), this protein is Formate-dependent phosphoribosylglycinamide formyltransferase.